The primary structure comprises 620 residues: Chaperone protein HscA homolog (620 aa).

The protein belongs to the heat shock protein 70 family.

Its function is as follows. Chaperone involved in the maturation of iron-sulfur cluster-containing proteins. Has a low intrinsic ATPase activity which is markedly stimulated by HscB. The chain is Chaperone protein HscA homolog from Bordetella petrii (strain ATCC BAA-461 / DSM 12804 / CCUG 43448).